A 558-amino-acid polypeptide reads, in one-letter code: SPATS2-like protein (558 aa).

Residue alanine 2 is modified to N-acetylalanine. Basic residues predominate over residues 63–79 (GKKKNNKRKRSKSKQHQ). The interval 63–204 (GKKKNNKRKR…SPVKSNAPAA (142 aa)) is disordered. Basic and acidic residues-rich tracts occupy residues 80–92 (GNKD…ERPE) and 110–142 (GCEK…EPPR). Residue serine 120 is modified to Phosphoserine. Positions 279 to 344 (KEEAMDILTA…ARFSCDIEQL (66 aa)) form a coiled coil. Disordered stretches follow at residues 385–406 (GNFA…ANPK) and 421–514 (TMPT…RQHA). A compositionally biased stretch (polar residues) spans 421–433 (TMPTNKQQNGPSS). Residues 469 to 485 (HEHRRQPHNGFRPKNKG) are compositionally biased toward basic residues.

This sequence belongs to the SPATS2 family.

It is found in the cytoplasm. Its subcellular location is the nucleus. The protein resides in the nucleolus. The protein is SPATS2-like protein (Spats2l) of Mus musculus (Mouse).